A 247-amino-acid chain; its full sequence is ATP synthase subunit a (247 aa).

Helical transmembrane passes span 24-44 (IAFTTSSAYMLLAVVLIAAMM), 82-102 (FFPLVFSLFMFIFVSNIVGII), 112-132 (IIVTFSLALLVFLTVIIYGFY), 141-161 (LFVPSGIPAVILPLVVIIEII), 181-201 (GHVTLKVFASFVTMLGALGFV), and 206-226 (ALLPLGLTVALTGLELMVAFL).

The protein belongs to the ATPase A chain family. As to quaternary structure, F-type ATPases have 2 components, CF(1) - the catalytic core - and CF(0) - the membrane proton channel. CF(1) has five subunits: alpha(3), beta(3), gamma(1), delta(1), epsilon(1). CF(0) has four main subunits: a, b, b' and c.

It localises to the cell inner membrane. Its function is as follows. Key component of the proton channel; it plays a direct role in the translocation of protons across the membrane. The chain is ATP synthase subunit a from Bradyrhizobium sp. (strain ORS 278).